Reading from the N-terminus, the 564-residue chain is MAAKPAPFGQSCSNCHKTTTSLWRRGPDNSLLCNACGLYQKHRKHARPVKSEDLKDISPLIQQVCKNGTCAGDGFCNGTGGSASCTGCPALNNRIRSLNASKSQSGRKSLSPNPSSVPSSTETKASPTPLESKPQIVSDTTTETSNGTSRRRSSHNQHEDSSPPHEPSVTFCQNCATTNTPLWRRDESGNPICNACGLYYKIHGVHRPVTMKKAIIKRRKRLVFNGNANESQHNLKRMSSGDSGSSVKQQSTRDGPFSKSFPNGNGHASGNSGEGLAEHGMNTGVLPPASTFPSYNSNFTGFLPSSFNPSPLMTLSRLAAGEPDNNGKVYYSYGPTQEQSILPLPENKHEGLPPYQNEYVPNGIRANQVVYPGQLVAVGNDSSKQLSESTTSNTDNNGVATANQSNPLGMKFHLPPILPVGESVCLPPRTSAKPRIAEGIASLLNPEEPPSNSDKQPSMSNGPKSEVSPSQSQQAPLIQSSTSPVSLQFPPEVQGSNVDKRNYALNVLSQLRSQHDLMIQELHNLNQHIQQIDEWLRSSDNENMASEHIKSSTPAVVASGALQT.

A GATA-type 1 zinc finger spans residues Cys-12–Cys-36. The disordered stretch occupies residues Ala-100–Thr-170. Residue Ser-109 is modified to Phosphoserine. Residues Ser-109–Ser-120 are compositionally biased toward low complexity. Polar residues predominate over residues Gln-135 to Thr-148. The GATA-type 2 zinc-finger motif lies at Cys-172–Cys-196. Disordered stretches follow at residues Gly-226–Val-285, Asp-381–Gly-409, and Leu-443–Ser-496. Polar residues-rich tracts occupy residues Ser-240 to Arg-253, Ser-260 to Asn-271, Asp-381 to Pro-407, and Pro-450 to Ser-486.

Interacts with tup11.

It localises to the nucleus. Its activity is regulated as follows. Activated by iron. Its function is as follows. Transcriptional repressor that binds the consensus promoter sequence 5'-[AT]GATAA-3' during iron-replete conditions to down-regulate transcription of target genes. Represses the expression of the iron transporter fio1 in response to high iron concentrations. Also represses the expression of str1, str2 and str3. Represses the expression of shu1 in presence of iron. The polypeptide is Iron-sensing transcriptional repressor (Schizosaccharomyces pombe (strain 972 / ATCC 24843) (Fission yeast)).